The sequence spans 357 residues: UDP-3-O-acylglucosamine N-acyltransferase (357 aa).

Residue His251 is the Proton acceptor of the active site.

This sequence belongs to the transferase hexapeptide repeat family. LpxD subfamily. Homotrimer.

It carries out the reaction a UDP-3-O-[(3R)-3-hydroxyacyl]-alpha-D-glucosamine + a (3R)-hydroxyacyl-[ACP] = a UDP-2-N,3-O-bis[(3R)-3-hydroxyacyl]-alpha-D-glucosamine + holo-[ACP] + H(+). It participates in bacterial outer membrane biogenesis; LPS lipid A biosynthesis. In terms of biological role, catalyzes the N-acylation of UDP-3-O-acylglucosamine using 3-hydroxyacyl-ACP as the acyl donor. Is involved in the biosynthesis of lipid A, a phosphorylated glycolipid that anchors the lipopolysaccharide to the outer membrane of the cell. This is UDP-3-O-acylglucosamine N-acyltransferase from Ralstonia pickettii (strain 12J).